The following is a 235-amino-acid chain: Class A basic helix-loop-helix protein 9 (235 aa).

Disordered stretches follow at residues 1–69 and 132–235; these read MLRG…RRMA and GHLE…HPRS. Positions 55–67 are enriched in basic residues; sequence RRRARPVRSKARR. The bHLH domain occupies 65 to 117; that stretch reads ARRMAANVRERKRILDYNEAFNALRRALRHDLGGKRLSKIATLRRAIHRIAAL.

As to quaternary structure, heterodimer. Efficient DNA binding requires dimerization with another bHLH protein. Interacts with TCF3, TCF4, and TCF12.

It localises to the nucleus. It is found in the cytoplasm. Its function is as follows. Transcription factor, which play a role in limb development. Is an essential player in the regulatory network governing transcription of genes implicated in limb morphogenesis. This is Class A basic helix-loop-helix protein 9 (BHLHA9) from Homo sapiens (Human).